Here is a 248-residue protein sequence, read N- to C-terminus: MYKLVLIRHGESTWNKENRFTGWVDVDLTEQGRNEAYQAGALLKEAGYTFDIAYTSVLKRAIRTLWHVQDKMDLMYLPVVHSWRLNERHYGALSGLNKAETAAKFGDDQVLVWRRSYDTPPPALEPTDERAPFSDPRYAKVPREQLPLTECLKDTVARVLPLWNESIAPAVRAGKQVLIAAHGNSLRALIKYLDGISDSDIVGLNIPNGVPLVYELDENLKPIQHYYLGDQDAIAKAQAAVAKQGKAG.

Residues 8-15 (RHGESTWN), 21-22 (TG), arginine 60, 87-90 (ERHY), lysine 98, 114-115 (RR), and 183-184 (GN) contribute to the substrate site. The Tele-phosphohistidine intermediate role is filled by histidine 9. The Proton donor/acceptor role is filled by glutamate 87.

This sequence belongs to the phosphoglycerate mutase family. BPG-dependent PGAM subfamily. In terms of assembly, homodimer.

It carries out the reaction (2R)-2-phosphoglycerate = (2R)-3-phosphoglycerate. It participates in carbohydrate degradation; glycolysis; pyruvate from D-glyceraldehyde 3-phosphate: step 3/5. Functionally, catalyzes the interconversion of 2-phosphoglycerate and 3-phosphoglycerate. This chain is 2,3-bisphosphoglycerate-dependent phosphoglycerate mutase, found in Burkholderia vietnamiensis (strain G4 / LMG 22486) (Burkholderia cepacia (strain R1808)).